Reading from the N-terminus, the 292-residue chain is Small ribosomal subunit protein uS2 (292 aa).

Residues 230 to 292 are disordered; that stretch reads RSGGAPGSEK…KKEAGSGEEA (63 aa). Basic and acidic residues-rich tracts occupy residues 247–259 and 271–292; these read EWERELLEGKTEA and PAKEEKAQAPEEKKEAGSGEEA.

The protein belongs to the universal ribosomal protein uS2 family.

The chain is Small ribosomal subunit protein uS2 from Thermobifida fusca (strain YX).